Reading from the N-terminus, the 104-residue chain is Nucleoid-associated protein Bsph_0039 (104 aa).

Residues 1–12 are compositionally biased toward low complexity; it reads MRGMGNMQGMMK. Residues 1-22 are disordered; that stretch reads MRGMGNMQGMMKKMQKMQKEMM.

This sequence belongs to the YbaB/EbfC family. As to quaternary structure, homodimer.

The protein localises to the cytoplasm. It is found in the nucleoid. Its function is as follows. Binds to DNA and alters its conformation. May be involved in regulation of gene expression, nucleoid organization and DNA protection. This chain is Nucleoid-associated protein Bsph_0039, found in Lysinibacillus sphaericus (strain C3-41).